The chain runs to 332 residues: Glycerol-3-phosphate dehydrogenase [NAD(P)+] (332 aa).

The NADPH site is built by Trp-11, Arg-30, and Lys-108. Residues Lys-108, Gly-137, and Ser-139 each coordinate sn-glycerol 3-phosphate. Ala-141 contacts NADPH. 5 residues coordinate sn-glycerol 3-phosphate: Lys-192, Asp-245, Ser-255, Arg-256, and Asn-257. Lys-192 acts as the Proton acceptor in catalysis. NADPH is bound at residue Arg-256. Residues Val-280 and Glu-282 each contribute to the NADPH site.

It belongs to the NAD-dependent glycerol-3-phosphate dehydrogenase family.

It is found in the cytoplasm. It carries out the reaction sn-glycerol 3-phosphate + NAD(+) = dihydroxyacetone phosphate + NADH + H(+). It catalyses the reaction sn-glycerol 3-phosphate + NADP(+) = dihydroxyacetone phosphate + NADPH + H(+). Its pathway is membrane lipid metabolism; glycerophospholipid metabolism. Functionally, catalyzes the reduction of the glycolytic intermediate dihydroxyacetone phosphate (DHAP) to sn-glycerol 3-phosphate (G3P), the key precursor for phospholipid synthesis. In Paraburkholderia phymatum (strain DSM 17167 / CIP 108236 / LMG 21445 / STM815) (Burkholderia phymatum), this protein is Glycerol-3-phosphate dehydrogenase [NAD(P)+].